The chain runs to 278 residues: Adenosylcobinamide-GDP ribazoletransferase (278 aa).

7 consecutive transmembrane segments (helical) span residues 31–51, 66–86, 115–135, 148–168, 187–207, 215–237, and 247–267; these read AMALAPFVGLALGLLAGSAVF, TLLPAVVGVTVLALVTRGLHL, TIGAFGAIIVLFVVLLQVGAL, ILVAAMTSRLAATLACTGAVP, DAALSFLAVCAVAALAGLLDF, ALRAVLAVWVGTGVSFLLRRYLL, and ILGGLIEITAAATLLVMAMTI.

Belongs to the CobS family. The cofactor is Mg(2+).

The protein resides in the cell membrane. The catalysed reaction is alpha-ribazole + adenosylcob(III)inamide-GDP = adenosylcob(III)alamin + GMP + H(+). The enzyme catalyses alpha-ribazole 5'-phosphate + adenosylcob(III)inamide-GDP = adenosylcob(III)alamin 5'-phosphate + GMP + H(+). Its pathway is cofactor biosynthesis; adenosylcobalamin biosynthesis; adenosylcobalamin from cob(II)yrinate a,c-diamide: step 7/7. Functionally, joins adenosylcobinamide-GDP and alpha-ribazole to generate adenosylcobalamin (Ado-cobalamin). Also synthesizes adenosylcobalamin 5'-phosphate from adenosylcobinamide-GDP and alpha-ribazole 5'-phosphate. This chain is Adenosylcobinamide-GDP ribazoletransferase, found in Frankia casuarinae (strain DSM 45818 / CECT 9043 / HFP020203 / CcI3).